The following is a 139-amino-acid chain: MGKRFSSFQAAQIRIARPTGQLDEIIRFYEEGLCLKRIGEFSQHNGYDGVMFGLPHADYHLEFTQYEGGSTAPVPHPDSLLVFYVPNAVELAAITSKLKHMGYQEVESENPYWSNGGVTIEDPDGWRIVFMNSKGISGK.

The VOC domain occupies 9 to 133; it reads QAAQIRIARP…DGWRIVFMNS (125 aa).

This is an uncharacterized protein from Bacillus subtilis (strain 168).